A 356-amino-acid chain; its full sequence is Histidinol-phosphate aminotransferase (356 aa).

Lys222 carries the post-translational modification N6-(pyridoxal phosphate)lysine.

This sequence belongs to the class-II pyridoxal-phosphate-dependent aminotransferase family. Histidinol-phosphate aminotransferase subfamily. In terms of assembly, homodimer. It depends on pyridoxal 5'-phosphate as a cofactor.

The enzyme catalyses L-histidinol phosphate + 2-oxoglutarate = 3-(imidazol-4-yl)-2-oxopropyl phosphate + L-glutamate. It participates in amino-acid biosynthesis; L-histidine biosynthesis; L-histidine from 5-phospho-alpha-D-ribose 1-diphosphate: step 7/9. The polypeptide is Histidinol-phosphate aminotransferase (Lactiplantibacillus plantarum (strain ATCC BAA-793 / NCIMB 8826 / WCFS1) (Lactobacillus plantarum)).